The following is a 737-amino-acid chain: MIDDSSLTAEMEEEESPATTIVPREPPKIQRLEESVVNRIAAGEVIQRPVSAVKELVENSLDADSSSISVVVKDGGLKLIQVSDDGHGIRREDLPILCERHTTSKLTKFEDLFSLSSMGFRGEALASMTYVAHVTVTTITKGQIHGYRVSYRDGVMEHEPKACAAVKGTQIMVENLFYNMIARRKTLQNSADDYGKIVDLLSRMAIHYNNVSFSCRKHGAVKADVHSVVSPSRLDSIRSVYGVSVAKNLMKVEVSSCDSSGCTFDMEGFISNSNYVAKKTILVLFINDRLVECSALKRAIEIVYAATLPKASKPFVYMSINLPREHVDINIHPTKKEVSLLNQEIIIEMIQSEVEVKLRNANDTRTFQEQKVEYIQSTLTSQKSDSPVSQKPSGQKTQKVPVNKMVRTDSSDPAGRLHAFLQPKPQSLPDKVSSLSVVRSSVRQRRNPKETADLSSVQELIAGVDSCCHPGMLETVRNCTYVGMADDVFALVQYNTHLYLANVVNLSKELMYQQTLRRFAHFNAIQLSDPAPLSELILLALKEEDLDPGNDTKDDLKERIAEMNTELLKEKAEMLEEYFSVHIDSSANLSRLPVILDQYTPDMDRVPEFLLCLGNDVEWEDEKSCFQGVSAAIGNFYAMHPPLLPNPSGDGIQFYSKRGESSQEKSDLEGNVDMEDNLDQDLLSDAENAWAQREWSIQHVLFPSMRLFLKPPASMASNGTFVKVASLEKLYKIFERC.

Disordered regions lie at residues 1-21 (MIDDSSLTAEMEEEESPATTI) and 378-416 (TLTSQKSDSPVSQKPSGQKTQKVPVNKMVRTDSSDPAGR). Residues 378–400 (TLTSQKSDSPVSQKPSGQKTQKV) are compositionally biased toward polar residues.

It belongs to the DNA mismatch repair MutL/HexB family. In terms of assembly, heterodimer of MLH1 and PMS1, called MutLalpha, which is the major MMR MutL activity correcting base-base mismatches as well as IDLs. The heterodimer binds double strand DNA independently of a mismatch with positive cooperativity and has more than one DNA binding site. Heterodimer of MLH1 and MLH3, called MutLbeta, which is involved in correction of a specific subset of IDLs when associated with MutSbeta. Ubiquitous.

It localises to the nucleus. Its function is as follows. Involved in DNA mismatch repair (MMR), correcting insertion-deletion loops (IDLs) resulting from DNA replication, DNA damage or from recombination events between non-identical sequences during meiosis. Component of the MutLbeta heterodimer, which probably forms a ternary complex with the MutSbeta heterodimer that initially recognizes the DNA mismatches. This complex is thought to be responsible for directing the downstream MMR events, including strand discrimination, excision, and resynthesis. Plays a major role in promoting meiotic crossing-over and is involved in maintaining the genetic stability of simple sequence repeats by correction of frameshift intermediates. This Arabidopsis thaliana (Mouse-ear cress) protein is DNA mismatch repair protein MLH1 (MLH1).